Consider the following 348-residue polypeptide: MKYSHQLVIGSLAVFVLTACSGSPTQRRQAKDDFEYLETPEFSQWQLPEDAQPQFYPNFDIPSGEFSGGTGRQVDIRPPQQVLELIPGARTERQNGEVTLWLLRAEEADRVWQTAVDMLTQRNIGIREQSENDIETDWVTWVSEDEEVEIGSRYSISRFQANNRHGFKINLIDWREGSEEKPVSATNKERYNAFLTNLVMARYDADLRAEAALKAQELVKRIPISMGSDRSGFPVIIARTPYNVLWQRLPTLLPTMGFELEERNQSQGTVKAKYAAPDDEFWEEIGLQPIDLAPGTYTFLFGDLGNRTSINVTDASGKPVEEELLKSMVPVLAHVADQTKDKKEAKSE.

A signal peptide spans 1 to 19 (MKYSHQLVIGSLAVFVLTA). Residue Cys20 is the site of N-palmitoyl cysteine attachment. A lipid anchor (S-diacylglycerol cysteine) is attached at Cys20.

It belongs to the BamC family. As to quaternary structure, part of the Bam complex.

The protein localises to the cell outer membrane. In terms of biological role, part of the outer membrane protein assembly complex, which is involved in assembly and insertion of beta-barrel proteins into the outer membrane. The sequence is that of Outer membrane protein assembly factor BamC from Vibrio atlanticus (strain LGP32) (Vibrio splendidus (strain Mel32)).